Here is a 494-residue protein sequence, read N- to C-terminus: Alpha-amylase A (494 aa).

A signal peptide spans 1–18; it reads MFLAKSIVCLALLAVANA. At Gln19 the chain carries Pyrrolidone carboxylic acid. A disulfide bond links Cys46 and Cys102. Ca(2+) contacts are provided by Asn116, Arg165, and Asp174. An intrachain disulfide couples Cys153 to Cys167. Arg202 serves as a coordination point for chloride. Catalysis depends on Asp204, which acts as the Nucleophile. His208 is a binding site for Ca(2+). The active-site Proton donor is Glu241. Positions 304 and 343 each coordinate chloride. 2 disulfides stabilise this stretch: Cys376–Cys382 and Cys448–Cys460.

It belongs to the glycosyl hydrolase 13 family. Monomer. Ca(2+) serves as cofactor. Chloride is required as a cofactor.

The catalysed reaction is Endohydrolysis of (1-&gt;4)-alpha-D-glucosidic linkages in polysaccharides containing three or more (1-&gt;4)-alpha-linked D-glucose units.. The polypeptide is Alpha-amylase A (Amy-p) (Drosophila melanogaster (Fruit fly)).